The primary structure comprises 591 residues: MVTTSGQTTQGYVIEAYGNLLRVRFDGHVRQGEVAYVNVNDAWLKAEVIEVVGQEVKIQVFEDTQDVCRGALVTFSGHLLEAELGPGLLQEIFDGLQNRLQVLAESSFFLKRGEYVNALCKNTLWEYTPKAVVGDVLVRGDALGVVKEGYFNHKIMVPFSCFKEVTITWVISEGEYSVDTVVAKARDADGQEYSFTMVQKWPIKQAFIQGDKVPCHEIMDVGVRILDTQVPVLKGGTFCTPGPFGAGKTVLQHHLSKYAAVDIVILCACGERAGEVVEVLQEFPHLTDPHTGKSLMHRTCIICNTSSMPVAARESSIYLGITIAEYYRQMGLHVLLLADSTSRWAQALREISGRLEEIPGEEAFPAYLASRIAAFYERGGAVRMKDGSEGSLTICGAVSPAGGNFEEPVTQATLSVVGAFCGLSKARADARRYPSIDPMISWSKYLDQVGEILEDKVQGWGEAVKKANYFLREGSEIGKRMEVVGEEGIPMEDMEIYLKSELYDFCYLQQNAFDPVDCYCPFDRQIELFALMSRIFDARFNFDSPDNARSFFLELQSKIKTLNGQKFLSDEYKEGMEVVLRLLETKMVQTA.

Position 242–249 (242–249 (GPFGAGKT)) interacts with ATP.

Belongs to the ATPase alpha/beta chains family.

The enzyme catalyses ATP + H2O + 4 H(+)(in) = ADP + phosphate + 5 H(+)(out). Functionally, produces ATP from ADP in the presence of a proton gradient across the membrane. The V-type alpha chain is a catalytic subunit. In Chlamydia abortus (strain DSM 27085 / S26/3) (Chlamydophila abortus), this protein is V-type ATP synthase alpha chain.